The following is a 215-amino-acid chain: MLQVYLVRHGETQWNAERRIQGQSDSPLTAKGEQQAMQVGERARSLGITHIISSDLGRTKRTAEIIAQACGCDITFDSRLRELDMGVLEKRQIDSLTEEEEGWRRQLVNGTQDGRIPDGESMQELSERVHAALASCLELPQGSRPLLVSHGIALGCLVSTILGLPAWAERRLRLRNCSISRVDYQESQWLASGWVVETAGDVSHLDAPALDELQR.

Residues 8–15, 21–22, R58, K60, 82–85, 104–105, and 151–152 contribute to the substrate site; these read RHGETQWN, QG, ELDM, RR, and GI. The active-site Tele-phosphohistidine intermediate is the H9. The active-site Proton donor/acceptor is E82.

Belongs to the phosphoglycerate mutase family. GpmB subfamily.

The enzyme catalyses (2R)-2-phosphoglycerate = (2R)-3-phosphoglycerate. Its pathway is carbohydrate degradation; glycolysis; pyruvate from D-glyceraldehyde 3-phosphate: step 3/5. This is Probable phosphoglycerate mutase GpmB from Salmonella arizonae (strain ATCC BAA-731 / CDC346-86 / RSK2980).